The sequence spans 447 residues: UDP-N-acetylmuramoylalanine--D-glutamate ligase (447 aa).

112 to 118 (GTNGKST) lines the ATP pocket.

This sequence belongs to the MurCDEF family.

The protein resides in the cytoplasm. It catalyses the reaction UDP-N-acetyl-alpha-D-muramoyl-L-alanine + D-glutamate + ATP = UDP-N-acetyl-alpha-D-muramoyl-L-alanyl-D-glutamate + ADP + phosphate + H(+). It functions in the pathway cell wall biogenesis; peptidoglycan biosynthesis. Functionally, cell wall formation. Catalyzes the addition of glutamate to the nucleotide precursor UDP-N-acetylmuramoyl-L-alanine (UMA). In Legionella pneumophila (strain Paris), this protein is UDP-N-acetylmuramoylalanine--D-glutamate ligase.